The sequence spans 367 residues: DNA polymerase IV (367 aa).

The UmuC domain maps to 14–198 (IIHIDMDAFF…LPIEKFHGVG (185 aa)). Residues D18 and D116 each contribute to the Mg(2+) site. E117 is an active-site residue.

Belongs to the DNA polymerase type-Y family. In terms of assembly, monomer. It depends on Mg(2+) as a cofactor.

Its subcellular location is the cytoplasm. The catalysed reaction is DNA(n) + a 2'-deoxyribonucleoside 5'-triphosphate = DNA(n+1) + diphosphate. Its function is as follows. Poorly processive, error-prone DNA polymerase involved in untargeted mutagenesis. Copies undamaged DNA at stalled replication forks, which arise in vivo from mismatched or misaligned primer ends. These misaligned primers can be extended by PolIV. Exhibits no 3'-5' exonuclease (proofreading) activity. May be involved in translesional synthesis, in conjunction with the beta clamp from PolIII. This chain is DNA polymerase IV, found in Streptococcus thermophilus (strain CNRZ 1066).